The primary structure comprises 269 residues: Zinc transporter ZupT (269 aa).

8 consecutive transmembrane segments (helical) span residues 11-31 (IALA…LLVL), 40-60 (LLAF…LSEI), 80-100 (YGTL…HFIP), 125-145 (ALLT…ATFF), 158-178 (AFAI…PVYF), 187-207 (FSAS…GYWL), 217-237 (FGWV…DELL), and 249-269 (TVYG…LFKW). Residues asparagine 136 and glutamate 139 each coordinate Fe(2+). Residues glutamate 139 and histidine 164 each coordinate Zn(2+). Fe(2+) is bound by residues asparagine 165, glutamate 168, and glutamate 197. Residue glutamate 168 coordinates Zn(2+).

This sequence belongs to the ZIP transporter (TC 2.A.5) family. ZupT subfamily.

It is found in the cell inner membrane. It carries out the reaction Zn(2+)(in) = Zn(2+)(out). In terms of biological role, mediates zinc uptake. May also transport other divalent cations. The protein is Zinc transporter ZupT of Stenotrophomonas maltophilia (strain K279a).